Reading from the N-terminus, the 591-residue chain is Aspartate--tRNA ligase (591 aa).

Glu173 is a binding site for L-aspartate. Residues 197–200 (QLFK) are aspartate. An L-aspartate-binding site is contributed by Arg219. ATP contacts are provided by residues 219–221 (RDE) and Gln228. His448 is an L-aspartate binding site. Residue Glu482 participates in ATP binding. Position 489 (Arg489) interacts with L-aspartate. 534–537 (GLDR) is a binding site for ATP.

The protein belongs to the class-II aminoacyl-tRNA synthetase family. Type 1 subfamily. In terms of assembly, homodimer.

The protein localises to the cytoplasm. It catalyses the reaction tRNA(Asp) + L-aspartate + ATP = L-aspartyl-tRNA(Asp) + AMP + diphosphate. Functionally, catalyzes the attachment of L-aspartate to tRNA(Asp) in a two-step reaction: L-aspartate is first activated by ATP to form Asp-AMP and then transferred to the acceptor end of tRNA(Asp). The sequence is that of Aspartate--tRNA ligase from Shewanella amazonensis (strain ATCC BAA-1098 / SB2B).